We begin with the raw amino-acid sequence, 677 residues long: Threonine--tRNA ligase (677 aa).

Residues 1-59 (MAQATISITVNGEAKEVEATTTGVELFAEDKNIIAVKINGENRDLYTPLNDGDTVDPIA) form the TGS domain. The catalytic stretch occupies residues 255–561 (DHRKLGAEMD…LLEHYAGAFP (307 aa)). Zn(2+)-binding residues include C360, H411, and H538.

It belongs to the class-II aminoacyl-tRNA synthetase family. Homodimer. Zn(2+) is required as a cofactor.

The protein localises to the cytoplasm. It carries out the reaction tRNA(Thr) + L-threonine + ATP = L-threonyl-tRNA(Thr) + AMP + diphosphate + H(+). Its function is as follows. Catalyzes the attachment of threonine to tRNA(Thr) in a two-step reaction: L-threonine is first activated by ATP to form Thr-AMP and then transferred to the acceptor end of tRNA(Thr). Also edits incorrectly charged L-seryl-tRNA(Thr). The polypeptide is Threonine--tRNA ligase (Bifidobacterium longum (strain NCC 2705)).